The chain runs to 140 residues: Putative pre-16S rRNA nuclease (140 aa).

It belongs to the YqgF nuclease family.

It localises to the cytoplasm. Functionally, could be a nuclease involved in processing of the 5'-end of pre-16S rRNA. This is Putative pre-16S rRNA nuclease from Enterococcus faecalis (strain ATCC 700802 / V583).